The following is a 1361-amino-acid chain: MEVLMAERANLVFHNKAIDGTAMKRLISRLIDHFGMAYTSHILDQLKTLGFQQATATSISLGIDDLLTIPSKGWLVQDAEQQSLILEKHHHYGNVHAVEKLRQSIEIWYSTSEYLRQEMNPNFRMTDPYNPVHIMSFSGARGNVSQVHQLVGMRGLMSDPQGQMIDLPIQSNLREGLSLTEYIISCYGARKGVVDTAVRTSDAGYLTRRLVEVVQHIVVRRRDCGTIRGISVSPQNSTMPERILIQTLIGRVLADDIYMGSRCIATRNQDIGVGLVNRFITLRTQLISIRTPFTCRSASWICRLCYGRSPTHGGLVELGEAVGIIAGQSIGEPGTQLTLRTFHTGGVFTGGTAEHVRAPSNGKIQFNEDLVHPTRTRHGHPAFLCYIDLYVTIESDDILHNVNIPPKSFLLVQNDQYVESEQVIAEIRAGTSTLNFKERVRKHIYSDSEGEMHWSTDVYHAPEFTYGNVHLLPKTSHLWVLSGKPYRSSVVPFSLSKDQDQMNTHSLSFEQIYISNPSVTNDQVKDKLSDSFSKKEDRITDYSELNRIGHCNLIYPAKNLDLLAKKRRNRFIIPFQGSQERKKELMSLSGISIEIPINGIFRKNSIFAYFDDPRYRRKSSGITKYGTIEMHSIVKKEDLIEYRGVKEFRPKYQMKVDRFFFIPEEVHILAGSSSIMVRNNSIIGVDTWITLNTRSRIGGVVRVERKKKKIELTIFSGDIHFPGETDKISRHSGILIPPSRKNSKDSKNLKKWIYVQRITPTKKKYFVLVRPVVPYEITDGINLATLFPQDLLQERDNVQLRVVNYILYGNGKVTRGISDTSIQLVRTCLVLNWNQDKKGSSIEEARGSFVEVRTNGMIQDFLKVNLVKPAISYISKRNDPSSEKKEGSDHTNMNPFYSIYIYPKTKLQKSFNQNQGTVRTLLGINKECQFFLILSSSNCFRIGPFKGVKYPKELIKKDPLIPIRNSFGPLGTALQIANFFSFYYLITHNQILVTNYLQLDNLKQTFQPFKFQYYLMDENGRIYNPDPCSNIIFNPFKLNWYFLHYHFCEETSTKIDLGQFVCENVCITKKGTHLKSGQVLIVQFDSVVIRSAKPYLATPGATLHGHYGEIIYEGDTLVTFIYEKSRSGDITQGLPKVEQVLEVRSIDSISINLEKRIDSWNERITRILGSPWGFLIGAELTIAQSRISLVNKIQKVYRSQGVQIHNRHIEIIVRQITSKVLVSEDGMSNVFLPGELIGLFRAERTGRALEEAICYRATLLGITRASLNTQSFISEASFQETARVLAKAALRGRIDWLKGLKENVVLGGMIPVGTGFKGFVHHSSQHKDIPLKTKKQNLFEGEMGDILFYHRELFESCLSKN.

Zn(2+) contacts are provided by C224, C295, C302, and C305.

This sequence belongs to the RNA polymerase beta' chain family. RpoC2 subfamily. In terms of assembly, in plastids the minimal PEP RNA polymerase catalytic core is composed of four subunits: alpha, beta, beta', and beta''. When a (nuclear-encoded) sigma factor is associated with the core the holoenzyme is formed, which can initiate transcription. The cofactor is Zn(2+).

It is found in the plastid. It localises to the chloroplast. It carries out the reaction RNA(n) + a ribonucleoside 5'-triphosphate = RNA(n+1) + diphosphate. Its function is as follows. DNA-dependent RNA polymerase catalyzes the transcription of DNA into RNA using the four ribonucleoside triphosphates as substrates. This is DNA-directed RNA polymerase subunit beta'' from Spinacia oleracea (Spinach).